Here is a 371-residue protein sequence, read N- to C-terminus: Chaperone protein DnaJ (371 aa).

The 65-residue stretch at 5 to 69 (DYYEVLGLSK…QKRAQYDQFG (65 aa)) folds into the J domain. A CR-type zinc finger spans residues 133 to 215 (GKELNVEIPV…CHGSGKVRKR (83 aa)). Residues Cys146, Cys149, Cys163, Cys166, Cys189, Cys192, Cys203, and Cys206 each coordinate Zn(2+). CXXCXGXG motif repeat units lie at residues 146–153 (CDTCKGSG), 163–170 (CKHCSGSG), 189–196 (CGHCSGTG), and 203–210 (CTTCHGSG).

This sequence belongs to the DnaJ family. Homodimer. The cofactor is Zn(2+).

It localises to the cytoplasm. Functionally, participates actively in the response to hyperosmotic and heat shock by preventing the aggregation of stress-denatured proteins and by disaggregating proteins, also in an autonomous, DnaK-independent fashion. Unfolded proteins bind initially to DnaJ; upon interaction with the DnaJ-bound protein, DnaK hydrolyzes its bound ATP, resulting in the formation of a stable complex. GrpE releases ADP from DnaK; ATP binding to DnaK triggers the release of the substrate protein, thus completing the reaction cycle. Several rounds of ATP-dependent interactions between DnaJ, DnaK and GrpE are required for fully efficient folding. Also involved, together with DnaK and GrpE, in the DNA replication of plasmids through activation of initiation proteins. The polypeptide is Chaperone protein DnaJ (Bacillus cereus (strain G9842)).